Consider the following 684-residue polypeptide: Glycine--tRNA ligase beta subunit (684 aa).

The protein belongs to the class-II aminoacyl-tRNA synthetase family. Tetramer of two alpha and two beta subunits.

It is found in the cytoplasm. It catalyses the reaction tRNA(Gly) + glycine + ATP = glycyl-tRNA(Gly) + AMP + diphosphate. The chain is Glycine--tRNA ligase beta subunit from Ectopseudomonas mendocina (strain ymp) (Pseudomonas mendocina).